We begin with the raw amino-acid sequence, 218 residues long: Phosphatidylserine decarboxylase proenzyme (218 aa).

The active-site Schiff-base intermediate with substrate; via pyruvic acid is S182. S182 is modified (pyruvic acid (Ser); by autocatalysis).

Belongs to the phosphatidylserine decarboxylase family. PSD-A subfamily. Heterodimer of a large membrane-associated beta subunit and a small pyruvoyl-containing alpha subunit. Requires pyruvate as cofactor. Is synthesized initially as an inactive proenzyme. Formation of the active enzyme involves a self-maturation process in which the active site pyruvoyl group is generated from an internal serine residue via an autocatalytic post-translational modification. Two non-identical subunits are generated from the proenzyme in this reaction, and the pyruvate is formed at the N-terminus of the alpha chain, which is derived from the carboxyl end of the proenzyme. The post-translation cleavage follows an unusual pathway, termed non-hydrolytic serinolysis, in which the side chain hydroxyl group of the serine supplies its oxygen atom to form the C-terminus of the beta chain, while the remainder of the serine residue undergoes an oxidative deamination to produce ammonia and the pyruvoyl prosthetic group on the alpha chain.

The protein resides in the cell membrane. The catalysed reaction is a 1,2-diacyl-sn-glycero-3-phospho-L-serine + H(+) = a 1,2-diacyl-sn-glycero-3-phosphoethanolamine + CO2. It functions in the pathway phospholipid metabolism; phosphatidylethanolamine biosynthesis; phosphatidylethanolamine from CDP-diacylglycerol: step 2/2. In terms of biological role, catalyzes the formation of phosphatidylethanolamine (PtdEtn) from phosphatidylserine (PtdSer). This chain is Phosphatidylserine decarboxylase proenzyme, found in Oleidesulfovibrio alaskensis (strain ATCC BAA-1058 / DSM 17464 / G20) (Desulfovibrio alaskensis).